A 305-amino-acid polypeptide reads, in one-letter code: Mitochondrial brown fat uncoupling protein 1 (305 aa).

The Mitochondrial intermembrane portion of the chain corresponds to Met-1–Pro-10. The helical transmembrane segment at Pro-11–Phe-32 threads the bilayer. Solcar repeat units lie at residues Pro-11–Phe-102, Ala-109–Ala-199, and Asp-208–Glu-293. The Mitochondrial matrix portion of the chain corresponds to Pro-33 to Lys-73. A fatty acid 16:0-binding site is contributed by Lys-56. Residues Leu-74–Tyr-96 traverse the membrane as a helical segment. Topologically, residues Asp-97–Lys-114 are mitochondrial intermembrane. The chain crosses the membrane as a helical span at residues Ile-115–Pro-131. At Thr-132–Thr-176 the chain is on the mitochondrial matrix side. Residues Pro-177–Tyr-193 form a helical membrane-spanning segment. At Asp-194–Val-210 the chain is on the mitochondrial intermembrane side. Residues Pro-211–Pro-230 form a helical membrane-spanning segment. At Val-231–Ala-264 the chain is on the mitochondrial matrix side. At Cys-252 the chain carries Cysteine sulfenic acid (-SOH). The chain crosses the membrane as a helical span at residues Phe-265–Phe-287. Fatty acid 16:0 is bound at residue Lys-267. Topologically, residues Glu-288–Thr-305 are mitochondrial intermembrane.

Belongs to the mitochondrial carrier (TC 2.A.29) family. In terms of assembly, most probably functions as a monomer. Binds one purine nucleotide per monomer. However, has also been suggested to function as a homodimer or a homotetramer. Tightly associates with cardiolipin in the mitochondrion inner membrane; may stabilize and regulate its activity. May undergo sulfenylation upon cold exposure. May increase the sensitivity of UCP1 thermogenic function to the activation by noradrenaline probably through structural effects. In terms of processing, may undergo ubiquitin-mediated proteasomal degradation.

The protein resides in the mitochondrion inner membrane. It carries out the reaction H(+)(in) = H(+)(out). Has no constitutive proton transporter activity and has to be activated by long-chain fatty acids/LCFAs. Inhibited by purine nucleotides. Both purine nucleotides and LCFAs bind the cytosolic side of the transporter and directly compete to activate or inhibit it. Activated by noradrenaline and reactive oxygen species. Despite lacking canonical translational encoding for selenocysteine, a small pool of the protein has been observed to selectively incorporate selenocysteine at 'Cys-252'. Selenocysteine-modified protein is highly sensitive to redox modification and may constitute a pool of protein highly sensitive to activation by elevated levels of reactive oxygen species (ROS). In terms of biological role, mitochondrial protein responsible for thermogenic respiration, a specialized capacity of brown adipose tissue and beige fat that participates in non-shivering adaptive thermogenesis to temperature and diet variations and more generally to the regulation of energy balance. Functions as a long-chain fatty acid/LCFA and proton symporter, simultaneously transporting one LCFA and one proton through the inner mitochondrial membrane. However, LCFAs remaining associated with the transporter via their hydrophobic tails, it results in an apparent transport of protons activated by LCFAs. Thereby, dissipates the mitochondrial proton gradient and converts the energy of substrate oxydation into heat instead of ATP. Regulates the production of reactive oxygen species/ROS by mitochondria. This Ovis aries (Sheep) protein is Mitochondrial brown fat uncoupling protein 1.